The following is a 296-amino-acid chain: Probable AP endonuclease (296 aa).

An intrachain disulfide couples C16 to C20. H78, H115, E142, H182, H218, D231, H233, and E271 together coordinate Zn(2+).

It belongs to the AP endonuclease 2 family. Requires Zn(2+) as cofactor.

The protein localises to the host nucleus. Its subcellular location is the host cytoplasm. It is found in the virion. Endonuclease that plays a role in DNA repair. Cleaves phosphodiester bonds on the 5' side of apurinic or apyrimidinic sites (AP sites). In addition to endonuclease activity, the ASFV enzyme has a proofreading 3'-5' exonuclease activity that is considerably more efficient in the elimination of a mismatch than in that of a correctly paired base. Displays 3'-phosphatase and 3'-repair diesterase activities. The single nucleotide gaps generated by the AP endonuclease are filled by the viral AP endonuclease and DNA ligase. In Ornithodoros (relapsing fever ticks), this protein is Probable AP endonuclease.